A 541-amino-acid polypeptide reads, in one-letter code: Membrane protein insertase YidC (541 aa).

5 consecutive transmembrane segments (helical) span residues 6-26 (NILL…WQAD), 349-369 (FVGN…GLLF), 420-440 (GGCL…WVLL), 457-477 (LSVQ…MFVM), and 500-520 (VIFT…WLVG).

It belongs to the OXA1/ALB3/YidC family. Type 1 subfamily. Interacts with the Sec translocase complex via SecD. Specifically interacts with transmembrane segments of nascent integral membrane proteins during membrane integration.

Its subcellular location is the cell inner membrane. Functionally, required for the insertion and/or proper folding and/or complex formation of integral membrane proteins into the membrane. Involved in integration of membrane proteins that insert both dependently and independently of the Sec translocase complex, as well as at least some lipoproteins. Aids folding of multispanning membrane proteins. The polypeptide is Membrane protein insertase YidC (Shewanella sp. (strain MR-7)).